The primary structure comprises 447 residues: Probable ethanolamine kinase B (447 aa).

Residues Ser-178–Ser-208 are compositionally biased toward low complexity. A disordered region spans residues Ser-178–Ser-217.

Belongs to the choline/ethanolamine kinase family.

Its subcellular location is the cytoplasm. It catalyses the reaction ethanolamine + ATP = phosphoethanolamine + ADP + H(+). Its pathway is phospholipid metabolism; phosphatidylethanolamine biosynthesis; phosphatidylethanolamine from ethanolamine: step 1/3. Highly specific for ethanolamine phosphorylation. May be a rate-controlling step in phosphatidylethanolamine biosynthesis. The polypeptide is Probable ethanolamine kinase B (etnkB) (Dictyostelium discoideum (Social amoeba)).